We begin with the raw amino-acid sequence, 42 residues long: Potassium channel toxin gamma-KTx 1.2 (42 aa).

4 disulfides stabilise this stretch: Cys-5–Cys-23, Cys-11–Cys-34, Cys-20–Cys-39, and Cys-24–Cys-41.

Belongs to the ergtoxin family. Gamma-KTx 1 subfamily. In terms of tissue distribution, expressed by the venom gland.

The protein resides in the secreted. In terms of biological role, blocks Kv11/ERG potassium channels. This is Potassium channel toxin gamma-KTx 1.2 from Centruroides elegans (Bark scorpion).